We begin with the raw amino-acid sequence, 226 residues long: Ethylene-responsive transcription factor-like protein At4g13040 (226 aa).

2 disordered regions span residues Glu63–Val109 and Lys195–Met226. Basic residues predominate over residues Pro97–Val109. Residues Arg105–Glu171 constitute a DNA-binding region (AP2/ERF). Residues Glu217–Met226 show a composition bias toward acidic residues.

This sequence belongs to the AP2/ERF transcription factor family.

The protein localises to the nucleus. Its function is as follows. Probably acts as a transcriptional activator. Binds to the GCC-box pathogenesis-related promoter element. May be involved in the regulation of gene expression by stress factors and by components of stress signal transduction pathways. The chain is Ethylene-responsive transcription factor-like protein At4g13040 from Arabidopsis thaliana (Mouse-ear cress).